The sequence spans 471 residues: Cell division protein FtsP (471 aa).

Positions 1 to 27 form a signal peptide, tat-type signal; it reads MSLNRRQFIQASGLALCAGMTPLAAKA. The Plastocyanin-like domain maps to 229 to 287; sequence VRLRLLNASNSRRYVMRLSDGRAMNVIASDQGLLPAPMAVNQLSLAPGERREILIDMSQ.

The protein belongs to the FtsP family. Post-translationally, predicted to be exported by the Tat system. The position of the signal peptide cleavage has not been experimentally proven.

Its subcellular location is the periplasm. Its function is as follows. Cell division protein that is required for growth during stress conditions. May be involved in protecting or stabilizing the divisomal assembly under conditions of stress. In Pectobacterium atrosepticum (strain SCRI 1043 / ATCC BAA-672) (Erwinia carotovora subsp. atroseptica), this protein is Cell division protein FtsP.